The chain runs to 222 residues: MAEPGRPAREAPAASSRKTHRAPRRPRPSRSASGASEPPLRSSVQPACDSAAGTHPVGNTVAMKQKKKKTPNRVSGTNGSEKPSEKPAPDEAPPSAEAQAEQLARELAWCVEQLELGLKTQRPTPKQKEQAVGAIRTLRSEKTPLPRKRQLMRSLFGDYRAQMDAEWREALRALKAATHSAQVQLVSEATRKKSGRVCRPRPAERAKTTPDLTSEEFRFNFF.

Over residues 1 to 16 (MAEPGRPAREAPAASS) the composition is skewed to low complexity. Disordered regions lie at residues 1–103 (MAEP…AEQL), 119–146 (KTQR…TPLP), and 186–210 (VSEA…KTTP). At alanine 2 the chain carries N-acetylalanine. The segment covering 17 to 28 (RKTHRAPRRPRP) has biased composition (basic residues). An Omega-N-methylarginine modification is found at arginine 27. A compositionally biased stretch (low complexity) spans 29–39 (SRSASGASEPP). A Phosphoserine modification is found at serine 75. Low complexity predominate over residues 93–103 (PPSAEAQAEQL).

Belongs to the UPF0488 family.

The chain is UPF0488 protein C8orf33 homolog from Mus musculus (Mouse).